The following is a 491-amino-acid chain: N-succinylglutamate 5-semialdehyde dehydrogenase (491 aa).

An NAD(+)-binding site is contributed by 225–230; it reads GSSTVG. Residues E248 and C282 contribute to the active site.

The protein belongs to the aldehyde dehydrogenase family. AstD subfamily.

It carries out the reaction N-succinyl-L-glutamate 5-semialdehyde + NAD(+) + H2O = N-succinyl-L-glutamate + NADH + 2 H(+). It participates in amino-acid degradation; L-arginine degradation via AST pathway; L-glutamate and succinate from L-arginine: step 4/5. Catalyzes the NAD-dependent reduction of succinylglutamate semialdehyde into succinylglutamate. This is N-succinylglutamate 5-semialdehyde dehydrogenase from Marinobacter nauticus (strain ATCC 700491 / DSM 11845 / VT8) (Marinobacter aquaeolei).